Reading from the N-terminus, the 286-residue chain is MEQVIGVIGGSGLYEMEGLQDVRSIVVETPFGAPSDEFVTGVLDGVRMVFLPRHGRGHRLLPTEVNYRANIYGMKKLGVTRIISVSAVGSMREEIVPGHIVIPDQFIDRTNATRANTFFGNGVVAHIQFADPVCADLSADLYAAAQEAGATVHRGGTYICMEGPAFSTRAESNLYRSFGVSVIGMTNIPEAKLAREAEICYGVIALATDYDCWHESHDDVSVDAIIAIIKQNVAMAKSIIRNAVRRIDRERNCPCASALRYAIITDKAAIPAETKERLDLIIGSYV.

Residues S11, 53–54 (RH), and 86–87 (SA) contribute to the phosphate site. M185 is a substrate binding site. T186 lines the phosphate pocket. 209-211 (DYD) lines the substrate pocket.

It belongs to the PNP/MTAP phosphorylase family. MTAP subfamily. As to quaternary structure, homohexamer. Dimer of a homotrimer.

It carries out the reaction S-methyl-5'-thioadenosine + phosphate = 5-(methylsulfanyl)-alpha-D-ribose 1-phosphate + adenine. The protein operates within amino-acid biosynthesis; L-methionine biosynthesis via salvage pathway; S-methyl-5-thio-alpha-D-ribose 1-phosphate from S-methyl-5'-thioadenosine (phosphorylase route): step 1/1. In terms of biological role, catalyzes the reversible phosphorylation of S-methyl-5'-thioadenosine (MTA) to adenine and 5-methylthioribose-1-phosphate. Involved in the breakdown of MTA, a major by-product of polyamine biosynthesis. Responsible for the first step in the methionine salvage pathway after MTA has been generated from S-adenosylmethionine. Has broad substrate specificity with 6-aminopurine nucleosides as preferred substrates. This chain is S-methyl-5'-thioadenosine phosphorylase, found in Geobacter sulfurreducens (strain ATCC 51573 / DSM 12127 / PCA).